We begin with the raw amino-acid sequence, 331 residues long: DNA fragmentation factor subunit alpha (331 aa).

An N-acetylmethionine modification is found at Met1. The 80-residue stretch at 17 to 96 folds into the CIDE-N domain; that stretch reads PLKPCLLRRN…ALACNEKWIY (80 aa). Phosphothreonine is present on Thr243. Residues 306–331 form a disordered region; that stretch reads LRNLSARRSPLPGEPQRPKRAKRDSS.

In terms of assembly, heterodimer of DFFA and DFFB. Caspase-3 cleaves DFF45 at 2 sites to generate an active factor.

It localises to the cytoplasm. Its function is as follows. Inhibitor of the caspase-activated DNase (DFF40). The chain is DNA fragmentation factor subunit alpha (Dffa) from Mus musculus (Mouse).